Consider the following 294-residue polypeptide: Phosphatidylserine decarboxylase proenzyme (294 aa).

Residues Asp113, His169, and Ser256 each act as charge relay system; for autoendoproteolytic cleavage activity in the active site. Ser256 acts as the Schiff-base intermediate with substrate; via pyruvic acid; for decarboxylase activity in catalysis. Ser256 carries the pyruvic acid (Ser); by autocatalysis modification.

The protein belongs to the phosphatidylserine decarboxylase family. PSD-B subfamily. Prokaryotic type II sub-subfamily. In terms of assembly, heterodimer of a large membrane-associated beta subunit and a small pyruvoyl-containing alpha subunit. Pyruvate is required as a cofactor. Is synthesized initially as an inactive proenzyme. Formation of the active enzyme involves a self-maturation process in which the active site pyruvoyl group is generated from an internal serine residue via an autocatalytic post-translational modification. Two non-identical subunits are generated from the proenzyme in this reaction, and the pyruvate is formed at the N-terminus of the alpha chain, which is derived from the carboxyl end of the proenzyme. The autoendoproteolytic cleavage occurs by a canonical serine protease mechanism, in which the side chain hydroxyl group of the serine supplies its oxygen atom to form the C-terminus of the beta chain, while the remainder of the serine residue undergoes an oxidative deamination to produce ammonia and the pyruvoyl prosthetic group on the alpha chain. During this reaction, the Ser that is part of the protease active site of the proenzyme becomes the pyruvoyl prosthetic group, which constitutes an essential element of the active site of the mature decarboxylase.

The protein localises to the cell membrane. It carries out the reaction a 1,2-diacyl-sn-glycero-3-phospho-L-serine + H(+) = a 1,2-diacyl-sn-glycero-3-phosphoethanolamine + CO2. It functions in the pathway phospholipid metabolism; phosphatidylethanolamine biosynthesis; phosphatidylethanolamine from CDP-diacylglycerol: step 2/2. Its function is as follows. Catalyzes the formation of phosphatidylethanolamine (PtdEtn) from phosphatidylserine (PtdSer). In Clostridium perfringens (strain ATCC 13124 / DSM 756 / JCM 1290 / NCIMB 6125 / NCTC 8237 / Type A), this protein is Phosphatidylserine decarboxylase proenzyme.